A 599-amino-acid chain; its full sequence is Aspartate--tRNA(Asp/Asn) ligase (599 aa).

Residue glutamate 174 participates in L-aspartate binding. An aspartate region spans residues glutamine 198 to lysine 201. Arginine 220 serves as a coordination point for L-aspartate. ATP-binding positions include arginine 220–glutamate 222 and glutamine 229. Residue histidine 457 coordinates L-aspartate. Residue glutamate 491 participates in ATP binding. Arginine 498 is an L-aspartate binding site. Glycine 543–arginine 546 serves as a coordination point for ATP.

This sequence belongs to the class-II aminoacyl-tRNA synthetase family. Type 1 subfamily. Homodimer.

It localises to the cytoplasm. The enzyme catalyses tRNA(Asx) + L-aspartate + ATP = L-aspartyl-tRNA(Asx) + AMP + diphosphate. Its function is as follows. Aspartyl-tRNA synthetase with relaxed tRNA specificity since it is able to aspartylate not only its cognate tRNA(Asp) but also tRNA(Asn). Reaction proceeds in two steps: L-aspartate is first activated by ATP to form Asp-AMP and then transferred to the acceptor end of tRNA(Asp/Asn). The sequence is that of Aspartate--tRNA(Asp/Asn) ligase from Paraburkholderia phymatum (strain DSM 17167 / CIP 108236 / LMG 21445 / STM815) (Burkholderia phymatum).